We begin with the raw amino-acid sequence, 449 residues long: L-seryl-tRNA(Sec) selenium transferase (449 aa).

Position 286 is an N6-(pyridoxal phosphate)lysine (Lys-286).

This sequence belongs to the SelA family. Requires pyridoxal 5'-phosphate as cofactor.

Its subcellular location is the cytoplasm. It carries out the reaction L-seryl-tRNA(Sec) + selenophosphate + H(+) = L-selenocysteinyl-tRNA(Sec) + phosphate. It functions in the pathway aminoacyl-tRNA biosynthesis; selenocysteinyl-tRNA(Sec) biosynthesis; selenocysteinyl-tRNA(Sec) from L-seryl-tRNA(Sec) (bacterial route): step 1/1. Its function is as follows. Converts seryl-tRNA(Sec) to selenocysteinyl-tRNA(Sec) required for selenoprotein biosynthesis. This is L-seryl-tRNA(Sec) selenium transferase from Sulfurimonas denitrificans (strain ATCC 33889 / DSM 1251) (Thiomicrospira denitrificans (strain ATCC 33889 / DSM 1251)).